A 48-amino-acid chain; its full sequence is Large ribosomal subunit protein bL33A (48 aa).

The protein belongs to the bacterial ribosomal protein bL33 family.

The chain is Large ribosomal subunit protein bL33A from Bacillus anthracis.